We begin with the raw amino-acid sequence, 200 residues long: Large ribosomal subunit protein bL9 (200 aa).

Belongs to the bacterial ribosomal protein bL9 family.

Binds to the 23S rRNA. The chain is Large ribosomal subunit protein bL9 from Ruegeria pomeroyi (strain ATCC 700808 / DSM 15171 / DSS-3) (Silicibacter pomeroyi).